Consider the following 98-residue polypeptide: MNQERLYKVLLGPHVSEKATLLAEINNQVVFRVAADAKKPEIKKAVEALFDVKVESVQVVNIKGKTKRTARGMGKRNDIRKAYIRLASGQSIDFVDVE.

This sequence belongs to the universal ribosomal protein uL23 family. As to quaternary structure, part of the 50S ribosomal subunit. Contacts protein L29, and trigger factor when it is bound to the ribosome.

In terms of biological role, one of the early assembly proteins it binds 23S rRNA. One of the proteins that surrounds the polypeptide exit tunnel on the outside of the ribosome. Forms the main docking site for trigger factor binding to the ribosome. This chain is Large ribosomal subunit protein uL23, found in Hahella chejuensis (strain KCTC 2396).